The sequence spans 259 residues: 5'-nucleotidase SurE (259 aa).

Positions 8, 9, 40, and 92 each coordinate a divalent metal cation.

This sequence belongs to the SurE nucleotidase family. A divalent metal cation serves as cofactor.

It localises to the cytoplasm. The catalysed reaction is a ribonucleoside 5'-phosphate + H2O = a ribonucleoside + phosphate. Functionally, nucleotidase that shows phosphatase activity on nucleoside 5'-monophosphates. This is 5'-nucleotidase SurE from Stenotrophomonas maltophilia (strain K279a).